We begin with the raw amino-acid sequence, 196 residues long: Thymidylate kinase (196 aa).

7–14 contacts ATP; that stretch reads GIDGSGKT.

The protein belongs to the thymidylate kinase family.

It catalyses the reaction dTMP + ATP = dTDP + ADP. Functionally, phosphorylation of dTMP to form dTDP in both de novo and salvage pathways of dTTP synthesis. The polypeptide is Thymidylate kinase (Wolbachia pipientis wMel).